A 314-amino-acid polypeptide reads, in one-letter code: Acetyl-coenzyme A carboxylase carboxyl transferase subunit alpha (314 aa).

The 258-residue stretch at 32-289 (EIDMLEASLE…KSAFVAQLDS (258 aa)) folds into the CoA carboxyltransferase C-terminal domain.

It belongs to the AccA family. Acetyl-CoA carboxylase is a heterohexamer composed of biotin carboxyl carrier protein (AccB), biotin carboxylase (AccC) and two subunits each of ACCase subunit alpha (AccA) and ACCase subunit beta (AccD).

Its subcellular location is the cytoplasm. The catalysed reaction is N(6)-carboxybiotinyl-L-lysyl-[protein] + acetyl-CoA = N(6)-biotinyl-L-lysyl-[protein] + malonyl-CoA. The protein operates within lipid metabolism; malonyl-CoA biosynthesis; malonyl-CoA from acetyl-CoA: step 1/1. Component of the acetyl coenzyme A carboxylase (ACC) complex. First, biotin carboxylase catalyzes the carboxylation of biotin on its carrier protein (BCCP) and then the CO(2) group is transferred by the carboxyltransferase to acetyl-CoA to form malonyl-CoA. The polypeptide is Acetyl-coenzyme A carboxylase carboxyl transferase subunit alpha (Staphylococcus aureus (strain NCTC 8325 / PS 47)).